The following is a 1388-amino-acid chain: DNA-directed RNA polymerase subunit beta' (1388 aa).

Zn(2+) contacts are provided by cysteine 70, cysteine 72, cysteine 85, and cysteine 88. Mg(2+) contacts are provided by aspartate 461, aspartate 463, and aspartate 465. Residues cysteine 808, cysteine 882, cysteine 889, and cysteine 892 each coordinate Zn(2+).

This sequence belongs to the RNA polymerase beta' chain family. In terms of assembly, the RNAP catalytic core consists of 2 alpha, 1 beta, 1 beta' and 1 omega subunit. When a sigma factor is associated with the core the holoenzyme is formed, which can initiate transcription. Mg(2+) serves as cofactor. The cofactor is Zn(2+).

It catalyses the reaction RNA(n) + a ribonucleoside 5'-triphosphate = RNA(n+1) + diphosphate. Its function is as follows. DNA-dependent RNA polymerase catalyzes the transcription of DNA into RNA using the four ribonucleoside triphosphates as substrates. The protein is DNA-directed RNA polymerase subunit beta' of Acidiphilium cryptum (strain JF-5).